Consider the following 69-residue polypeptide: Alpha-conotoxin-like Tx1 (69 aa).

A signal peptide spans methionine 1–serine 21. Positions serine 22–proline 49 are excised as a propeptide. 2 cysteine pairs are disulfide-bonded: cysteine 51–cysteine 57 and cysteine 52–cysteine 65. The interval serine 53–proline 55 is ser-Xaa-Pro motif, crucial for potent interaction with nAChR. Glycine 66 bears the Glycine amide mark.

This sequence belongs to the conotoxin A superfamily. As to expression, expressed by the venom duct.

The protein resides in the secreted. Its function is as follows. Alpha-conotoxins act on postsynaptic membranes, they bind to the nicotinic acetylcholine receptors (nAChR) and thus inhibit them. In Conus textile (Cloth-of-gold cone), this protein is Alpha-conotoxin-like Tx1.